Consider the following 246-residue polypeptide: Pyridoxine 5'-phosphate synthase (246 aa).

Position 12 (Asn12) interacts with 3-amino-2-oxopropyl phosphate. 14-15 (DH) serves as a coordination point for 1-deoxy-D-xylulose 5-phosphate. Arg23 is a 3-amino-2-oxopropyl phosphate binding site. His48 (proton acceptor) is an active-site residue. 1-deoxy-D-xylulose 5-phosphate-binding residues include Arg50 and His55. Glu75 (proton acceptor) is an active-site residue. Thr105 lines the 1-deoxy-D-xylulose 5-phosphate pocket. The Proton donor role is filled by His196. 3-amino-2-oxopropyl phosphate contacts are provided by residues Gly197 and 218-219 (GH).

The protein belongs to the PNP synthase family. Homooctamer; tetramer of dimers.

The protein resides in the cytoplasm. The catalysed reaction is 3-amino-2-oxopropyl phosphate + 1-deoxy-D-xylulose 5-phosphate = pyridoxine 5'-phosphate + phosphate + 2 H2O + H(+). The protein operates within cofactor biosynthesis; pyridoxine 5'-phosphate biosynthesis; pyridoxine 5'-phosphate from D-erythrose 4-phosphate: step 5/5. In terms of biological role, catalyzes the complicated ring closure reaction between the two acyclic compounds 1-deoxy-D-xylulose-5-phosphate (DXP) and 3-amino-2-oxopropyl phosphate (1-amino-acetone-3-phosphate or AAP) to form pyridoxine 5'-phosphate (PNP) and inorganic phosphate. The chain is Pyridoxine 5'-phosphate synthase from Pseudomonas putida (strain GB-1).